Here is a 155-residue protein sequence, read N- to C-terminus: Small ribosomal subunit protein uS7cz/uS7cy (155 aa).

The protein belongs to the universal ribosomal protein uS7 family. As to quaternary structure, part of the 30S ribosomal subunit.

It localises to the plastid. The protein resides in the chloroplast. Functionally, one of the primary rRNA binding proteins, it binds directly to 16S rRNA where it nucleates assembly of the head domain of the 30S subunit. The sequence is that of Small ribosomal subunit protein uS7cz/uS7cy (rps7-A) from Morus indica (Mulberry).